Reading from the N-terminus, the 294-residue chain is Formamidopyrimidine-DNA glycosylase (294 aa).

The active-site Schiff-base intermediate with DNA is Pro2. The active-site Proton donor is the Glu3. Catalysis depends on Lys61, which acts as the Proton donor; for beta-elimination activity. The DNA site is built by His104, Arg123, and Lys169. The segment at 255–289 adopts an FPG-type zinc-finger fold; that stretch reads AVYGRQDEPCRRCGAPIVREKFMNRSSYSCPRCQP. Arg279 acts as the Proton donor; for delta-elimination activity in catalysis.

Belongs to the FPG family. Monomer. Requires Zn(2+) as cofactor.

It carries out the reaction Hydrolysis of DNA containing ring-opened 7-methylguanine residues, releasing 2,6-diamino-4-hydroxy-5-(N-methyl)formamidopyrimidine.. It catalyses the reaction 2'-deoxyribonucleotide-(2'-deoxyribose 5'-phosphate)-2'-deoxyribonucleotide-DNA = a 3'-end 2'-deoxyribonucleotide-(2,3-dehydro-2,3-deoxyribose 5'-phosphate)-DNA + a 5'-end 5'-phospho-2'-deoxyribonucleoside-DNA + H(+). Its function is as follows. Involved in base excision repair of DNA damaged by oxidation or by mutagenic agents. Acts as a DNA glycosylase that recognizes and removes damaged bases. Has a preference for oxidized purines, such as 7,8-dihydro-8-oxoguanine (8-oxoG). Has AP (apurinic/apyrimidinic) lyase activity and introduces nicks in the DNA strand. Cleaves the DNA backbone by beta-delta elimination to generate a single-strand break at the site of the removed base with both 3'- and 5'-phosphates. The chain is Formamidopyrimidine-DNA glycosylase from Nocardia farcinica (strain IFM 10152).